Consider the following 1486-residue polypeptide: Chromosome partition protein MukB (1486 aa).

34 to 41 contributes to the ATP binding site; it reads GGNGAGKS. Coiled coils occupy residues 334–418, 444–480, and 509–603; these read SDHL…QYNQ, LETFQAKEQEATEKMLSLEQKMSMAQTAHSQFEQAYQ, and RHLA…RAPV. A flexible hinge region spans residues 666 to 783; the sequence is PGGSEDQRLN…EVPLFGRAAR (118 aa). Coiled coils occupy residues 835-923, 977-1115, and 1209-1266; these read EAEI…AKLE, EMLS…TAKA, and VEAI…QNVS.

It belongs to the SMC family. MukB subfamily. As to quaternary structure, homodimerization via its hinge domain. Binds to DNA via its C-terminal region. Interacts, and probably forms a ternary complex, with MukE and MukF via its C-terminal region. The complex formation is stimulated by calcium or magnesium. Interacts with tubulin-related protein FtsZ.

Its subcellular location is the cytoplasm. The protein localises to the nucleoid. Plays a central role in chromosome condensation, segregation and cell cycle progression. Functions as a homodimer, which is essential for chromosome partition. Involved in negative DNA supercoiling in vivo, and by this means organize and compact chromosomes. May achieve or facilitate chromosome segregation by condensation DNA from both sides of a centrally located replisome during cell division. This is Chromosome partition protein MukB from Shigella sonnei (strain Ss046).